Here is a 122-residue protein sequence, read N- to C-terminus: UPF0102 protein XCV0816 (122 aa).

It belongs to the UPF0102 family.

The sequence is that of UPF0102 protein XCV0816 from Xanthomonas euvesicatoria pv. vesicatoria (strain 85-10) (Xanthomonas campestris pv. vesicatoria).